The following is a 331-amino-acid chain: Olfactory receptor 6K3 (331 aa).

Residues 1–41 (MCWTMPSPFTGSSTRNMESGNQSTVTEFIFTGFPQLQDGSL) lie on the Extracellular side of the membrane. N21 is a glycosylation site (N-linked (GlcNAc...) asparagine). Residues 42-62 (LYFFPLLFIYTFIIIDNLLIF) traverse the membrane as a helical segment. Residues 63–70 (SAVRLDTH) lie on the Cytoplasmic side of the membrane. Residues 71–91 (LHNPMYNFISIFSFLEIWYTT) traverse the membrane as a helical segment. At 92-115 (ATIPKMLSNLISEKKAISMTGCIL) the chain is on the extracellular side. Residues C113 and C205 are joined by a disulfide bond. Residues 116–136 (QMYFFHSLENSEGILLTTMAI) traverse the membrane as a helical segment. The Cytoplasmic portion of the chain corresponds to 137–155 (DRYVAICNPLRYQMIMTPR). Residues 156-176 (LCAQLSAGSCLFGFLILLPEI) traverse the membrane as a helical segment. Topologically, residues 177 to 212 (VMISTLPFCGPNQIHQIFCDLVPVLSLACTDTSMIL) are extracellular. A helical membrane pass occupies residues 213-232 (IEDVIHAVTIIITFLIIALS). Residues 233–252 (YVRIVTVILRIPSSEGRQKA) lie on the Cytoplasmic side of the membrane. The helical transmembrane segment at 253-273 (FSTCAGHLMVFPIFFGSVSLM) threads the bilayer. The Extracellular portion of the chain corresponds to 274 to 286 (YLRFSDTYPPVLD). A helical membrane pass occupies residues 287-307 (TAIALMFTVLAPFFNPIIYSL). The Cytoplasmic portion of the chain corresponds to 308–331 (RNKDMNNAIKKLFCLQKVLNKPGG).

It belongs to the G-protein coupled receptor 1 family.

It is found in the cell membrane. Functionally, odorant receptor. This chain is Olfactory receptor 6K3 (OR6K3), found in Homo sapiens (Human).